Consider the following 193-residue polypeptide: dCTP deaminase (193 aa).

Residues 110 to 115 (RSSLAR), D128, 136 to 138 (VLE), Y171, K178, and Q182 each bind dCTP. E138 (proton donor/acceptor) is an active-site residue.

It belongs to the dCTP deaminase family. In terms of assembly, homotrimer.

It carries out the reaction dCTP + H2O + H(+) = dUTP + NH4(+). The protein operates within pyrimidine metabolism; dUMP biosynthesis; dUMP from dCTP (dUTP route): step 1/2. Its function is as follows. Catalyzes the deamination of dCTP to dUTP. This is dCTP deaminase from Buchnera aphidicola subsp. Acyrthosiphon pisum (strain APS) (Acyrthosiphon pisum symbiotic bacterium).